Consider the following 704-residue polypeptide: D-(-)-3-hydroxybutyrate oligomer hydrolase (704 aa).

An N-terminal signal peptide occupies residues 1–31; sequence MTTTNRNNLKLTALTAAVLTLSACGGSDAVA. Residue serine 309 is the Charge relay system of the active site.

This sequence belongs to the D-(-)-3-hydroxybutyrate oligomer hydrolase family.

The protein localises to the secreted. It carries out the reaction (3R)-hydroxybutanoate dimer + H2O = 2 (R)-3-hydroxybutanoate + H(+). The protein operates within lipid metabolism; butanoate metabolism. Participates in the degradation of poly-3-hydroxybutyrate (PHB). It works downstream of poly(3-hydroxybutyrate) depolymerase, hydrolyzing D(-)-3-hydroxybutyrate oligomers of various length (3HB-oligomers) into 3HB-monomers. This chain is D-(-)-3-hydroxybutyrate oligomer hydrolase, found in Albidiferax ferrireducens (strain ATCC BAA-621 / DSM 15236 / T118) (Rhodoferax ferrireducens).